Here is a 294-residue protein sequence, read N- to C-terminus: 4-hydroxy-tetrahydrodipicolinate synthase (294 aa).

Thr-44 lines the pyruvate pocket. Tyr-132 (proton donor/acceptor) is an active-site residue. The active-site Schiff-base intermediate with substrate is Lys-160. Ile-205 contributes to the pyruvate binding site.

It belongs to the DapA family. In terms of assembly, homotetramer; dimer of dimers.

It is found in the cytoplasm. The enzyme catalyses L-aspartate 4-semialdehyde + pyruvate = (2S,4S)-4-hydroxy-2,3,4,5-tetrahydrodipicolinate + H2O + H(+). Its pathway is amino-acid biosynthesis; L-lysine biosynthesis via DAP pathway; (S)-tetrahydrodipicolinate from L-aspartate: step 3/4. In terms of biological role, catalyzes the condensation of (S)-aspartate-beta-semialdehyde [(S)-ASA] and pyruvate to 4-hydroxy-tetrahydrodipicolinate (HTPA). In Kosmotoga olearia (strain ATCC BAA-1733 / DSM 21960 / TBF 19.5.1), this protein is 4-hydroxy-tetrahydrodipicolinate synthase.